We begin with the raw amino-acid sequence, 250 residues long: Phosphate import ATP-binding protein PstB (250 aa).

The region spanning 4–245 is the ABC transporter domain; the sequence is LTARDLKLSF…PRHELTEKYV (242 aa). Residue 36–43 participates in ATP binding; sequence GPSGSGKS.

Belongs to the ABC transporter superfamily. Phosphate importer (TC 3.A.1.7) family. In terms of assembly, the complex is composed of two ATP-binding proteins (PstB), two transmembrane proteins (PstC and PstA) and a solute-binding protein (PstS).

It localises to the cell membrane. The enzyme catalyses phosphate(out) + ATP + H2O = ADP + 2 phosphate(in) + H(+). In terms of biological role, part of the ABC transporter complex PstSACB involved in phosphate import. Responsible for energy coupling to the transport system. In Pyrobaculum aerophilum (strain ATCC 51768 / DSM 7523 / JCM 9630 / CIP 104966 / NBRC 100827 / IM2), this protein is Phosphate import ATP-binding protein PstB.